The primary structure comprises 465 residues: Iron-sulfur cluster assembly SufBD family protein SSP1857 (465 aa).

This sequence belongs to the iron-sulfur cluster assembly SufBD family.

This is Iron-sulfur cluster assembly SufBD family protein SSP1857 from Staphylococcus saprophyticus subsp. saprophyticus (strain ATCC 15305 / DSM 20229 / NCIMB 8711 / NCTC 7292 / S-41).